A 629-amino-acid chain; its full sequence is DNA-directed RNA polymerase subunit beta' (629 aa).

The Zn(2+) site is built by Cys-70, Cys-72, Cys-85, and Cys-88. Asp-472, Asp-474, and Asp-476 together coordinate Mg(2+).

This sequence belongs to the RNA polymerase beta' chain family. RpoC1 subfamily. In terms of assembly, in plastids the minimal PEP RNA polymerase catalytic core is composed of four subunits: alpha, beta, beta', and beta''. When a (nuclear-encoded) sigma factor is associated with the core the holoenzyme is formed, which can initiate transcription. Mg(2+) serves as cofactor. Requires Zn(2+) as cofactor.

Its subcellular location is the plastid. It localises to the chloroplast. It catalyses the reaction RNA(n) + a ribonucleoside 5'-triphosphate = RNA(n+1) + diphosphate. In terms of biological role, DNA-dependent RNA polymerase catalyzes the transcription of DNA into RNA using the four ribonucleoside triphosphates as substrates. The polypeptide is DNA-directed RNA polymerase subunit beta' (Pyropia yezoensis (Susabi-nori)).